The primary structure comprises 136 residues: Transcription antitermination protein NusB (136 aa).

This sequence belongs to the NusB family.

Functionally, involved in transcription antitermination. Required for transcription of ribosomal RNA (rRNA) genes. Binds specifically to the boxA antiterminator sequence of the ribosomal RNA (rrn) operons. This chain is Transcription antitermination protein NusB, found in Salinispora arenicola (strain CNS-205).